The primary structure comprises 215 residues: Inositol diphosphatase DSP1 (215 aa).

Residues 58-209 enclose the Tyrosine-protein phosphatase domain; the sequence is NFSMVDNGIF…VSSFSHIPMS (152 aa). A WPD loop important for active site topology region spans residues 114-126; that stretch reads FGIEGNKEPFVNI. 1D-myo-inositol hexakisphosphate contacts are provided by asparagine 125, isoleucine 126, histidine 129, and lysine 130. The active-site Phosphocysteine intermediate is the cysteine 150.

This sequence belongs to the protein-tyrosine phosphatase family. Atypical dual-specificity phosphatase Siw14-like subfamily. Homodimer and homohexamer; behaves as a monomer in solution. As to expression, highly expressed in siliques and at lower levels in roots, leaves and flowers.

The enzyme catalyses 5-diphospho-1D-myo-inositol 1,2,3,4,6-pentakisphosphate + H2O = 1D-myo-inositol hexakisphosphate + phosphate + H(+). The catalysed reaction is 1,5-bis(diphospho)-1D-myo-inositol 2,3,4,6-tetrakisphosphate + H2O = 1-diphospho-1D-myo-inositol 2,3,4,5,6-pentakisphosphate + phosphate + 2 H(+). It carries out the reaction 3,5-bis(diphospho)-1D-myo-inositol 1,2,4,6-tetrakisphosphate + H2O = 3-diphospho-1D-myo-inositol 1,2,4,5,6-pentakisphosphate + phosphate + 2 H(+). It catalyses the reaction 6-diphospho-1D-myo-inositol pentakisphosphate + H2O = 1D-myo-inositol hexakisphosphate + phosphate + H(+). The enzyme catalyses 5-diphospho-1D-myo-inositol 1,3,4,6-tetrakisphosphate + H2O = 1D-myo-inositol 1,3,4,5,6-pentakisphosphate + phosphate + H(+). Its activity is regulated as follows. Inhibited by manganese, calcium and zinc ions but not magnesium ions. Its function is as follows. Cleaves the beta-phosphate at the 5-position of soluble inositol pyrophosphates. Has highest activity on 5-diphosphoinositol 1,2,3,4,6-pentakisphosphate (5-InsP(7)), 1,5-bis-diphosphoinositol 2,3,4,6-tetrakisphosphate (1,5-InsP(8)) and 3,5-InsP(8), but has weak activity against 1-diphosphoinositol 2,3,4,5,6-pentakisphosphate (1-InsP(7)). Dephosphorylates the phosphoinositides PI(3,4,5)P3, PI(3,5)P2, but not PI(3)P, PI(3,4)P2 or PI(4,5)P2. Possesses phosphotyrosine phosphatase activity in vitro, and can hydrolyze para-nitrophenyl phosphate, O-methylfluorescein phosphate, polyphosphate and ATP. In Arabidopsis thaliana (Mouse-ear cress), this protein is Inositol diphosphatase DSP1.